We begin with the raw amino-acid sequence, 702 residues long: Methionine--tRNA ligase (702 aa).

Residues 14–24 (PYANGPVHLGH) carry the 'HIGH' region motif. Cys146, Cys149, Cys159, and Cys162 together coordinate Zn(2+). The 'KMSKS' region signature appears at 344–348 (KFSKS). Lys347 contributes to the ATP binding site. One can recognise a tRNA-binding domain in the interval 601-702 (DFQKVDLRVA…GEKINGQSVQ (102 aa)).

It belongs to the class-I aminoacyl-tRNA synthetase family. MetG type 1 subfamily. Homodimer. It depends on Zn(2+) as a cofactor.

It localises to the cytoplasm. It carries out the reaction tRNA(Met) + L-methionine + ATP = L-methionyl-tRNA(Met) + AMP + diphosphate. In terms of biological role, is required not only for elongation of protein synthesis but also for the initiation of all mRNA translation through initiator tRNA(fMet) aminoacylation. The protein is Methionine--tRNA ligase of Chlorobium luteolum (strain DSM 273 / BCRC 81028 / 2530) (Pelodictyon luteolum).